A 225-amino-acid chain; its full sequence is PKHD-type hydroxylase YbiX (225 aa).

Residues 78 to 177 (TLSTPLFNRY…RVASFMWIQS (100 aa)) enclose the Fe2OG dioxygenase domain. 3 residues coordinate Fe cation: H96, D98, and H158. Position 168 (R168) interacts with 2-oxoglutarate.

The cofactor is Fe(2+). L-ascorbate serves as cofactor.

The chain is PKHD-type hydroxylase YbiX from Escherichia coli O45:K1 (strain S88 / ExPEC).